Reading from the N-terminus, the 349-residue chain is MEKQHLKSQIAALRVPTFNIAWPERRSPKADVVEERMMKWADHHKLLVNGEYRDRVIRTRYGLLAARCYPNAGEELLQAIADYFVWFFLADDLFVDRVEVVTDETIRNLTAMIDVLDRNVAREEPVFGELAWLDVCQRLRDLLQPEAFQRFAQGMRLWATTAALQILNHQRPKSVGIREYEAIRRHTSGLNPCTSLADAANKGSVQAHEFYQPDVQKLVLQTNNIVCWANDIQSLGMEIQQPGQFRNMVTIYIQQGQSLSEAVSTTTARVNNELSDFCKLADIVTAPSISDELRVYVDGLKYWIRGYMDWVVHDTERYADKFIASDADDRCVSTLNPSLLNRSSSSATE.

Asp-91 and Asp-96 together coordinate Mg(2+). The DDXXXD motif signature appears at 91–96 (DDLFVD). Residue Arg-184 participates in substrate binding. Mg(2+) is bound by residues Asn-230, Ser-234, and Glu-238.

It belongs to the terpene synthase family. Mg(2+) serves as cofactor.

The enzyme catalyses (2E,6E)-farnesyl diphosphate + H2O = (+)-corvol ether B + diphosphate. The catalysed reaction is (2E,6E)-farnesyl diphosphate + H2O = (+)-corvol ether A + diphosphate. Its function is as follows. Terpene synthase that catalyzes the conversion of (2E,6E)-farnesyl diphosphate (FPP) into sesquiterpenes which are important for fungi-environment interactions. Produces a mixture consisting of 8 sesquiterpenes including corvol ethers A and B, as well as traces of epizonarene, gamma-cadinene, delta-cadinene, alpha-cadinene, alpha-cadinol, and an unidentified sesquiterpene. Produces both corvol ether A and corvol ether B in similar concentrations. The polypeptide is Sesquiterpene synthase MAC_05714 (Metarhizium acridum (strain CQMa 102)).